A 224-amino-acid chain; its full sequence is Putative adhesin A1E_05320 (224 aa).

Residues 1-22 (MKKLLLIAATSATMLSSTLSFA) form the signal peptide.

The sequence is that of Putative adhesin A1E_05320 from Rickettsia canadensis (strain McKiel).